We begin with the raw amino-acid sequence, 170 residues long: tRNA-splicing endonuclease (170 aa).

Catalysis depends on residues tyrosine 110, histidine 116, and lysine 147.

Belongs to the tRNA-intron endonuclease family. Archaeal short subfamily. As to quaternary structure, homotetramer; although the tetramer contains four active sites, only two participate in the cleavage. Therefore, it should be considered as a dimer of dimers.

It catalyses the reaction pretRNA = a 3'-half-tRNA molecule with a 5'-OH end + a 5'-half-tRNA molecule with a 2',3'-cyclic phosphate end + an intron with a 2',3'-cyclic phosphate and a 5'-hydroxyl terminus.. In terms of biological role, endonuclease that removes tRNA introns. Cleaves pre-tRNA at the 5'- and 3'-splice sites to release the intron. The products are an intron and two tRNA half-molecules bearing 2',3' cyclic phosphate and 5'-OH termini. Recognizes a pseudosymmetric substrate in which 2 bulged loops of 3 bases are separated by a stem of 4 bp. In Pyrococcus furiosus (strain ATCC 43587 / DSM 3638 / JCM 8422 / Vc1), this protein is tRNA-splicing endonuclease.